We begin with the raw amino-acid sequence, 400 residues long: Clotting factor B (400 aa).

The N-terminal stretch at 1–23 (MTWICVITLFALASATLGNKVSR) is a signal peptide. Positions 36 to 80 (ECTARGGLKGSCKSLIDCPSVLATLKDSFPVVCSWNGRFQPIVCC) constitute a Clip domain. Intrachain disulfides connect C37–C79, C47–C68, and C53–C80. A propeptide spans 104 to 124 (LPRLHISGCGKRKVKIDITTV) (activation peptide). An N-linked (GlcNAc...) asparagine glycan is attached at N140. The Peptidase S1 domain occupies 148 to 392 (IAGGVEAKIG…YLDWIAKVTN (245 aa)). Active-site charge relay system residues include H192 and D240. N251 carries N-linked (GlcNAc...) asparagine glycosylation. 2 cysteine pairs are disulfide-bonded: C307/C329 and C340/C368. S344 functions as the Charge relay system in the catalytic mechanism. Residue N352 is glycosylated (N-linked (GlcNAc...) asparagine).

The protein belongs to the peptidase S1 family. CLIP subfamily. Upon activation by factor C, it is converted to a two-chain active form composed of a light and a heavy chain linked by a disulfide bond.

Its subcellular location is the secreted. It carries out the reaction Selective cleavage of 98-Arg-|-Ile-99 bond in Limulus proclotting enzyme to form active clotting enzyme.. Strongly inhibited by alpha2-plasmin inhibitor and DFP. Partially inhibited by benzamidine, leupeptin and PCMB. This enzyme is closely associated with an endotoxin-sensitive hemolymph coagulation system which may play important roles in both hemostasis and host defense mechanisms. Its active form catalyzes the activation of proclotting enzyme. Does not activate the mammalian coagulation factors factor IX, factor X, prothrombin, plasminogen, protein C or prekallikrein. Does not hydrolyze fibrinogen. Does not catalyze the activation of factor C or coagulogen. This is Clotting factor B from Tachypleus tridentatus (Japanese horseshoe crab).